The chain runs to 514 residues: Lysine--tRNA ligase (514 aa).

Over residues 1–13 the composition is skewed to low complexity; the sequence is MSKPNNQNQQNNQ. The segment at 1–21 is disordered; sequence MSKPNNQNQQNNQEPAPEDAN. Residues Glu-422 and Glu-429 each contribute to the Mg(2+) site.

This sequence belongs to the class-II aminoacyl-tRNA synthetase family. As to quaternary structure, homodimer. It depends on Mg(2+) as a cofactor.

It localises to the cytoplasm. The enzyme catalyses tRNA(Lys) + L-lysine + ATP = L-lysyl-tRNA(Lys) + AMP + diphosphate. This is Lysine--tRNA ligase from Psychrobacter cryohalolentis (strain ATCC BAA-1226 / DSM 17306 / VKM B-2378 / K5).